Here is a 714-residue protein sequence, read N- to C-terminus: VIN3-like protein 2 (714 aa).

The PHD-type zinc-finger motif lies at 164–232 (RCSCCICRKY…CFYCVSCGKA (69 aa)). A Nuclear localization signal motif is present at residues 239-246 (WKKQLTIA). The 98-residue stretch at 366-463 (GSTKIRFEDV…INVLTRSAEE (98 aa)) folds into the Fibronectin type-III domain. Residues 478 to 498 (LTNCSTLSSNPSSVEAESNND) are compositionally biased toward polar residues. Positions 478-530 (LTNCSTLSSNPSSVEAESNNDYIVPKKPSSKNEDNNSPSVDESAAKRMKRTTD) are disordered. The VIN3-Interacting Domain (VID) stretch occupies residues 602 to 714 (SMKDNCNNGD…PSGFCMKLWH (113 aa)).

Self-interacts. Interacts with VIN3 and VIL1. Component of the plant homeodomain / polycomb repressive complex 2 (PHD-PRC2) large complex during prolonged cold, composed of core PRC2 components (VRN2, EZA1, FIE and MSI1), and three related PHD finger proteins (VIL1, VIL2 and VIN3) that mediates histone H3 trimethylation on 'Lys-27' (H3K27me3).

Its subcellular location is the nucleus. In terms of biological role, maybe involved in both the vernalization and photoperiod pathways by regulating gene expression. Binds preferentially to dimethylated histone H3 'Lys-9' (H3K9me2). Promotes flowering in non-inductive photoperiods (e.g. short days) through the maintenance of the epigenetically repressed state of MAF5 via H3K9me2 and plant homeodomain / polycomb repressive complex 2 (PHD-PRC2)-dependent H3K27me3. The protein is VIN3-like protein 2 (VIL2) of Arabidopsis thaliana (Mouse-ear cress).